Reading from the N-terminus, the 147-residue chain is Large ribosomal subunit protein uL13 (147 aa).

This sequence belongs to the universal ribosomal protein uL13 family. Part of the 50S ribosomal subunit.

Its function is as follows. This protein is one of the early assembly proteins of the 50S ribosomal subunit, although it is not seen to bind rRNA by itself. It is important during the early stages of 50S assembly. The sequence is that of Large ribosomal subunit protein uL13 from Arthrobacter sp. (strain FB24).